A 2222-amino-acid polypeptide reads, in one-letter code: Protein SWEETIE (2222 aa).

HEAT repeat units follow at residues 37 to 75 (LLCF…LVTL), 228 to 265 (SEFD…LGMH), 331 to 368 (SELQ…GVID), 510 to 540 (PARL…SEKE), 541 to 578 (AGWL…GNPE), 611 to 648 (CNDG…LVDI), 768 to 807 (QGML…GLKA), 898 to 936 (MALS…TIEA), 968 to 1008 (QGIG…WQEI), and 1029 to 1066 (VSVH…KDPV). The segment at 1133–1165 (IAENDPAYTRENLGDDDEDMVSSSSGKSIRANP) is disordered. HEAT repeat units follow at residues 1238 to 1269 (MRPI…LLEQ), 1270 to 1306 (YQAQ…TSGI), 1312 to 1354 (VAVK…AHAS), 1372 to 1410 (VEFE…NLKK), 1434 to 1474 (EAWP…LEAE), 1550 to 1586 (DLCQ…NCPK), 1783 to 1820 (VMLK…RYNN), 1836 to 1874 (GDIV…HSIT), 1880 to 1917 (GFMS…LVSH), and 1966 to 2006 (AMDI…QVST). Residues 1992–2203 (EALSTMPTSF…DESSKEHVGA (212 aa)) are disordered. Polar residues predominate over residues 1996 to 2009 (TMPTSFNQVSTVES). Residues 2010-2027 (GTDEEEEEEEDDDDDDWD) show a composition bias toward acidic residues. Over residues 2028–2040 (TFQSFPASTNLEG) the composition is skewed to polar residues. Over residues 2062 to 2072 (QDDESNAEETD) the composition is skewed to acidic residues. Composition is skewed to basic and acidic residues over residues 2073 to 2096 (DQHL…SKEV) and 2108 to 2124 (TRED…EETV). The segment covering 2150 to 2164 (NEQSVESKNLESENI) has biased composition (polar residues). The span at 2191–2202 (SPEDESSKEHVG) shows a compositional bias: basic and acidic residues.

It belongs to the HEATR5 family.

Functionally, may regulate multiple metabolic, hormonal and stress-related pathways. Required for carbohydrate metabolism and homoeostasis. May also monitor ethylene biosynthesis and senescence. This is Protein SWEETIE from Arabidopsis thaliana (Mouse-ear cress).